Reading from the N-terminus, the 272-residue chain is S-adenosylmethionine decarboxylase proenzyme (272 aa).

Ser-122 serves as the catalytic Schiff-base intermediate with substrate; via pyruvic acid. Residue Ser-122 is modified to Pyruvic acid (Ser); by autocatalysis. His-127 functions as the Proton acceptor; for processing activity in the catalytic mechanism. Catalysis depends on Cys-150, which acts as the Proton donor; for catalytic activity.

This sequence belongs to the prokaryotic AdoMetDC family. Type 2 subfamily. Heterooctamer of four alpha and four beta chains arranged as a tetramer of alpha/beta heterodimers. Requires pyruvate as cofactor. In terms of processing, is synthesized initially as an inactive proenzyme. Formation of the active enzyme involves a self-maturation process in which the active site pyruvoyl group is generated from an internal serine residue via an autocatalytic post-translational modification. Two non-identical subunits are generated from the proenzyme in this reaction, and the pyruvate is formed at the N-terminus of the alpha chain, which is derived from the carboxyl end of the proenzyme. The post-translation cleavage follows an unusual pathway, termed non-hydrolytic serinolysis, in which the side chain hydroxyl group of the serine supplies its oxygen atom to form the C-terminus of the beta chain, while the remainder of the serine residue undergoes an oxidative deamination to produce ammonia and the pyruvoyl group blocking the N-terminus of the alpha chain.

It catalyses the reaction S-adenosyl-L-methionine + H(+) = S-adenosyl 3-(methylsulfanyl)propylamine + CO2. The protein operates within amine and polyamine biosynthesis; S-adenosylmethioninamine biosynthesis; S-adenosylmethioninamine from S-adenosyl-L-methionine: step 1/1. Its function is as follows. Catalyzes the decarboxylation of S-adenosylmethionine to S-adenosylmethioninamine (dcAdoMet), the propylamine donor required for the synthesis of the polyamines spermine and spermidine from the diamine putrescine. This chain is S-adenosylmethionine decarboxylase proenzyme, found in Clostridium botulinum (strain Eklund 17B / Type B).